The chain runs to 114 residues: FK506-binding protein 1 (114 aa).

Positions 26 to 114 (GDLVTIHYTG…VFDVELLKIN (89 aa)) constitute a PPIase FKBP-type domain.

This sequence belongs to the FKBP-type PPIase family. FKBP1 subfamily.

Its subcellular location is the cytoplasm. The catalysed reaction is [protein]-peptidylproline (omega=180) = [protein]-peptidylproline (omega=0). With respect to regulation, inhibited by both FK506 and rapamycin. PPIases accelerate the folding of proteins. It catalyzes the cis-trans isomerization of proline imidic peptide bonds in oligopeptides. In Kluyveromyces lactis (strain ATCC 8585 / CBS 2359 / DSM 70799 / NBRC 1267 / NRRL Y-1140 / WM37) (Yeast), this protein is FK506-binding protein 1 (FPR1).